The primary structure comprises 443 residues: Xaa-Pro dipeptidase (443 aa).

5 residues coordinate Mn(2+): aspartate 246, aspartate 257, histidine 339, glutamate 384, and glutamate 423.

The protein belongs to the peptidase M24B family. Bacterial-type prolidase subfamily. Mn(2+) serves as cofactor.

It carries out the reaction Xaa-L-Pro dipeptide + H2O = an L-alpha-amino acid + L-proline. Splits dipeptides with a prolyl residue in the C-terminal position. This chain is Xaa-Pro dipeptidase, found in Enterobacter sp. (strain 638).